A 355-amino-acid chain; its full sequence is Putative [LysW]-L-2-aminoadipate/[LysW]-L-glutamate phosphate reductase (355 aa).

13–16 lines the NADP(+) pocket; that stretch reads SGMT. Cysteine 153 is a catalytic residue. An NADP(+)-binding site is contributed by asparagine 323.

Belongs to the NAGSA dehydrogenase family. Type 1 subfamily. LysY sub-subfamily.

The protein resides in the cytoplasm. The catalysed reaction is [amino-group carrier protein]-C-terminal-N-(1-carboxy-5-oxopentan-1-yl)-L-glutamine + phosphate + NADP(+) = [amino-group carrier protein]-C-terminal-N-(1-carboxy-5-phosphooxy-5-oxopentan-1-yl)-L-glutamine + NADPH + H(+). It catalyses the reaction [amino-group carrier protein]-C-terminal-gamma-(L-glutamyl-5-semialdehyde)-L-glutamate + phosphate + NADP(+) = [amino-group carrier protein]-C-terminal-gamma-(5-phospho-L-glutamyl)-L-glutamate + NADPH + H(+). The protein operates within amino-acid biosynthesis; L-lysine biosynthesis via AAA pathway; L-lysine from L-alpha-aminoadipate (Thermus route): step 3/5. It participates in amino-acid biosynthesis; L-arginine biosynthesis. In terms of biological role, involved in both the arginine and lysine biosynthetic pathways. The protein is Putative [LysW]-L-2-aminoadipate/[LysW]-L-glutamate phosphate reductase of Aeropyrum pernix (strain ATCC 700893 / DSM 11879 / JCM 9820 / NBRC 100138 / K1).